Consider the following 393-residue polypeptide: NAD(P)H-quinone oxidoreductase subunit H, chloroplastic (393 aa).

This sequence belongs to the complex I 49 kDa subunit family. As to quaternary structure, NDH is composed of at least 16 different subunits, 5 of which are encoded in the nucleus.

The protein resides in the plastid. Its subcellular location is the chloroplast thylakoid membrane. The catalysed reaction is a plastoquinone + NADH + (n+1) H(+)(in) = a plastoquinol + NAD(+) + n H(+)(out). It carries out the reaction a plastoquinone + NADPH + (n+1) H(+)(in) = a plastoquinol + NADP(+) + n H(+)(out). In terms of biological role, NDH shuttles electrons from NAD(P)H:plastoquinone, via FMN and iron-sulfur (Fe-S) centers, to quinones in the photosynthetic chain and possibly in a chloroplast respiratory chain. The immediate electron acceptor for the enzyme in this species is believed to be plastoquinone. Couples the redox reaction to proton translocation, and thus conserves the redox energy in a proton gradient. The polypeptide is NAD(P)H-quinone oxidoreductase subunit H, chloroplastic (Calycanthus floridus var. glaucus (Eastern sweetshrub)).